The chain runs to 277 residues: Undecaprenyl-diphosphatase (277 aa).

8 consecutive transmembrane segments (helical) span residues 1–21, 38–58, 93–113, 118–138, 168–188, 191–211, 222–242, and 256–276; these read MDIIQAIIIGIVQGLTEFLPV, SSLAFDVFLHLGSLIAVLWFF, LVWYVIIATIPVGLVGVLFES, LFAGALYVPAFFLFVTGTILY, AILPGLSRSGTTIAAGLVIGL, EFAAKFSFILSIPAILGAFVV, FNALAILFGFLAALISGYLAI, and IFAYYCWIVGIIVFMGSITHL.

The protein belongs to the UppP family.

The protein resides in the cell membrane. The enzyme catalyses di-trans,octa-cis-undecaprenyl diphosphate + H2O = di-trans,octa-cis-undecaprenyl phosphate + phosphate + H(+). Its function is as follows. Catalyzes the dephosphorylation of undecaprenyl diphosphate (UPP). The polypeptide is Undecaprenyl-diphosphatase (Methanobrevibacter smithii (strain ATCC 35061 / DSM 861 / OCM 144 / PS)).